Consider the following 270-residue polypeptide: Regulatory protein RecX (270 aa).

The protein belongs to the RecX family.

It localises to the cytoplasm. Its function is as follows. Modulates RecA activity. The sequence is that of Regulatory protein RecX from Bacillus thuringiensis subsp. konkukian (strain 97-27).